Reading from the N-terminus, the 572-residue chain is Arginine--tRNA ligase (572 aa).

Positions 122 to 132 match the 'HIGH' region motif; it reads PNLAKEMHVGH.

Belongs to the class-I aminoacyl-tRNA synthetase family. As to quaternary structure, monomer.

The protein resides in the cytoplasm. The catalysed reaction is tRNA(Arg) + L-arginine + ATP = L-arginyl-tRNA(Arg) + AMP + diphosphate. In Neisseria gonorrhoeae (strain NCCP11945), this protein is Arginine--tRNA ligase.